The sequence spans 352 residues: Fe(3+) ions import ATP-binding protein FbpC 1 (352 aa).

The ABC transporter domain maps to 11–241 (VELKHITKRF…PASRFMASFM (231 aa)). ATP is bound at residue 43–50 (GPSGCGKT).

It belongs to the ABC transporter superfamily. Fe(3+) ion importer (TC 3.A.1.10) family. The complex is composed of two ATP-binding proteins (FbpC), two transmembrane proteins (FbpB) and a solute-binding protein (FbpA).

The protein localises to the cell inner membrane. It carries out the reaction Fe(3+)(out) + ATP + H2O = Fe(3+)(in) + ADP + phosphate + H(+). Functionally, part of the ABC transporter complex FbpABC involved in Fe(3+) ions import. Responsible for energy coupling to the transport system. This is Fe(3+) ions import ATP-binding protein FbpC 1 from Pectobacterium atrosepticum (strain SCRI 1043 / ATCC BAA-672) (Erwinia carotovora subsp. atroseptica).